A 416-amino-acid polypeptide reads, in one-letter code: Gamma-glutamyl phosphate reductase (416 aa).

It belongs to the gamma-glutamyl phosphate reductase family.

It is found in the cytoplasm. The catalysed reaction is L-glutamate 5-semialdehyde + phosphate + NADP(+) = L-glutamyl 5-phosphate + NADPH + H(+). Its pathway is amino-acid biosynthesis; L-proline biosynthesis; L-glutamate 5-semialdehyde from L-glutamate: step 2/2. Its function is as follows. Catalyzes the NADPH-dependent reduction of L-glutamate 5-phosphate into L-glutamate 5-semialdehyde and phosphate. The product spontaneously undergoes cyclization to form 1-pyrroline-5-carboxylate. This chain is Gamma-glutamyl phosphate reductase, found in Petrotoga mobilis (strain DSM 10674 / SJ95).